The chain runs to 215 residues: Adenylate kinase (215 aa).

Residue 10–15 (GAGKGT) participates in ATP binding. The tract at residues 30-59 (STGDMLRSAIKSGSELGKKAKQVMDAGQLV) is NMP. AMP-binding positions include threonine 31, arginine 36, 57–59 (QLV), 85–88 (GFPR), and glutamine 92. An LID region spans residues 122 to 159 (GRRVHPGSGRVYHVEHNPPKVEGKDDETGEDLVVRPDD). ATP is bound by residues arginine 123 and 132-133 (VY). The segment at 128-151 (GSGRVYHVEHNPPKVEGKDDETGE) is disordered. The segment covering 133–144 (YHVEHNPPKVEG) has biased composition (basic and acidic residues). AMP-binding residues include arginine 156 and arginine 167. The tract at residues 195-215 (KIDGTQPVERVSEQLGDLLRK) is disordered. ATP is bound at residue glutamine 200.

This sequence belongs to the adenylate kinase family. As to quaternary structure, monomer.

The protein resides in the cytoplasm. It catalyses the reaction AMP + ATP = 2 ADP. It participates in purine metabolism; AMP biosynthesis via salvage pathway; AMP from ADP: step 1/1. Its function is as follows. Catalyzes the reversible transfer of the terminal phosphate group between ATP and AMP. Plays an important role in cellular energy homeostasis and in adenine nucleotide metabolism. This chain is Adenylate kinase, found in Idiomarina loihiensis (strain ATCC BAA-735 / DSM 15497 / L2-TR).